A 175-amino-acid polypeptide reads, in one-letter code: uncharacterized protein (175 aa).

Disordered stretches follow at residues 1 to 32 (MSHKDFNGLQAPQLLSSSSPVAKKQSSHKLRH) and 156 to 175 (KQKQAKRAANTRQRTYKYRQ). The span at 14-24 (LLSSSSPVAKK) shows a compositional bias: low complexity.

This is an uncharacterized protein from Mycoplasma pneumoniae (strain ATCC 29342 / M129 / Subtype 1) (Mycoplasmoides pneumoniae).